Consider the following 331-residue polypeptide: Probable transaldolase (331 aa).

Residue lysine 142 is the Schiff-base intermediate with substrate of the active site.

This sequence belongs to the transaldolase family. Type 1 subfamily. As to quaternary structure, homodimer.

It localises to the cytoplasm. The enzyme catalyses D-sedoheptulose 7-phosphate + D-glyceraldehyde 3-phosphate = D-erythrose 4-phosphate + beta-D-fructose 6-phosphate. The protein operates within carbohydrate degradation; pentose phosphate pathway; D-glyceraldehyde 3-phosphate and beta-D-fructose 6-phosphate from D-ribose 5-phosphate and D-xylulose 5-phosphate (non-oxidative stage): step 2/3. Its function is as follows. Transaldolase is important for the balance of metabolites in the pentose-phosphate pathway. The chain is Probable transaldolase from Drosophila melanogaster (Fruit fly).